The sequence spans 386 residues: Phosphate acyltransferase (386 aa).

The interval 359–386 (PHRARQDELGENKVVGADQSMTAKATGT) is disordered. Polar residues predominate over residues 377–386 (QSMTAKATGT).

This sequence belongs to the PlsX family. As to quaternary structure, homodimer. Probably interacts with PlsY.

It localises to the cytoplasm. The catalysed reaction is a fatty acyl-[ACP] + phosphate = an acyl phosphate + holo-[ACP]. It participates in lipid metabolism; phospholipid metabolism. Catalyzes the reversible formation of acyl-phosphate (acyl-PO(4)) from acyl-[acyl-carrier-protein] (acyl-ACP). This enzyme utilizes acyl-ACP as fatty acyl donor, but not acyl-CoA. This Beijerinckia indica subsp. indica (strain ATCC 9039 / DSM 1715 / NCIMB 8712) protein is Phosphate acyltransferase.